The chain runs to 84 residues: Transcriptional regulator WhiB1 (84 aa).

The 4Fe-4S Wbl-type domain occupies 8-70 (VCRDEDPELF…GGMSEDERRA (63 aa)). Residues Cys-9, Cys-37, Cys-40, and Cys-46 each contribute to the [4Fe-4S] cluster site.

The protein belongs to the WhiB family. As to quaternary structure, homodimer. [4Fe-4S] cluster is required as a cofactor. Post-translationally, the Fe-S cluster can be nitrosylated by nitric oxide (NO). Upon Fe-S cluster removal intramolecular disulfide bonds are formed.

It is found in the cytoplasm. Functionally, acts as a transcriptional regulator. Probably redox-responsive. The apo- but not holo-form probably binds DNA. In Mycobacterium tuberculosis (strain CDC 1551 / Oshkosh), this protein is Transcriptional regulator WhiB1 (whiB1).